The chain runs to 175 residues: MLEKNKYLYIFRHIQTNQVLLSQGNVLKKTALFQLPYPLQKPVAPNGMRPAKLRKDHWVPLLKVEFPNESMFQSVFMQLLNYRKYRSVQPLTSDLLKLPIPVRRRKIMRQEVPNTIADLADILNKEKFPENSVRLQLSDKSDSEYADWPPSVQIDSEEIKLSRGFREKTTVDEAR.

Belongs to the mitochondrion-specific ribosomal protein mL67 family. Component of the mitochondrial large ribosomal subunit (mt-LSU). Mature yeast 74S mitochondrial ribosomes consist of a small (37S) and a large (54S) subunit. The 37S small subunit contains a 15S ribosomal RNA (15S mt-rRNA) and at least 32 different proteins. The 54S large subunit contains a 21S rRNA (21S mt-rRNA) and at least 45 different proteins.

Its subcellular location is the mitochondrion. Functionally, component of the mitochondrial ribosome (mitoribosome), a dedicated translation machinery responsible for the synthesis of mitochondrial genome-encoded proteins, including at least some of the essential transmembrane subunits of the mitochondrial respiratory chain. The mitoribosomes are attached to the mitochondrial inner membrane and translation products are cotranslationally integrated into the membrane. mL67/mhr1 also has extraribosomal functions, being involved in regulation of mitochondrial DNA recombination, maintenance and repair, and generation of homoplasmic cells. mL67/mhr1 also acts as transcription factor involved in regulation of RNA polymerase II-dependent transcription. The chain is Large ribosomal subunit protein mL67 (mhr1) from Schizosaccharomyces pombe (strain 972 / ATCC 24843) (Fission yeast).